The sequence spans 353 residues: Peptide methionine sulfoxide reductase MsrA/MsrB (353 aa).

The interval 43-196 (REIYLAGGCF…PNGYCHIDIT (154 aa)) is peptide methionine sulfoxide reductase A. C51 is a catalytic residue. The region spanning 213-336 (DAELKAKLTP…NSASIKFIPL (124 aa)) is the MsrB domain. C325 (nucleophile) is an active-site residue.

The protein in the N-terminal section; belongs to the MsrA Met sulfoxide reductase family. It in the C-terminal section; belongs to the MsrB Met sulfoxide reductase family.

The catalysed reaction is L-methionyl-[protein] + [thioredoxin]-disulfide + H2O = L-methionyl-(S)-S-oxide-[protein] + [thioredoxin]-dithiol. It carries out the reaction [thioredoxin]-disulfide + L-methionine + H2O = L-methionine (S)-S-oxide + [thioredoxin]-dithiol. It catalyses the reaction L-methionyl-[protein] + [thioredoxin]-disulfide + H2O = L-methionyl-(R)-S-oxide-[protein] + [thioredoxin]-dithiol. Its function is as follows. Has an important function as a repair enzyme for proteins that have been inactivated by oxidation. Catalyzes the reversible oxidation-reduction of methionine sulfoxide in proteins to methionine. This Haemophilus influenzae (strain ATCC 51907 / DSM 11121 / KW20 / Rd) protein is Peptide methionine sulfoxide reductase MsrA/MsrB (msrAB).